Here is a 274-residue protein sequence, read N- to C-terminus: uncharacterized protein (274 aa).

This is an uncharacterized protein from Mycobacterium tuberculosis (strain ATCC 25618 / H37Rv).